A 256-amino-acid polypeptide reads, in one-letter code: Cytoplasmic envelopment protein 1 (256 aa).

It belongs to the herpesviridae cytoplasmic envelopment protein 1 family.

It is found in the virion. The protein localises to the virion tegument. The protein resides in the host cytoplasm. It localises to the host Golgi apparatus. Functionally, plays a critical role in cytoplasmic virus egress. Participates in the final step of tegumentation and envelope acquisition within the host cytoplasm. The chain is Cytoplasmic envelopment protein 1 (U75) from Homo sapiens (Human).